A 399-amino-acid chain; its full sequence is uncharacterized protein (399 aa).

The next 10 membrane-spanning stretches (helical) occupy residues F7–I27, F33–P53, A79–L99, L131–I151, F153–I173, V208–Y228, S242–I262, P296–V316, L335–S355, and A357–L377.

The protein belongs to the major facilitator superfamily. Drug:H(+) antiporter-3 (DHA3) (TC 2.A.1.21) family.

It is found in the cell membrane. This is an uncharacterized protein from Bacillus subtilis (strain 168).